A 245-amino-acid chain; its full sequence is NAD-dependent protein deacylase (245 aa).

The Deacetylase sirtuin-type domain occupies 1–237; it reads MNFPYRNIVV…PKLVEELLAH (237 aa). 13-32 contributes to the NAD(+) binding site; sequence GAGISAESGIQTFRAQDGLW. Substrate contacts are provided by Tyr57 and Arg60. 94–97 contributes to the NAD(+) binding site; sequence QNID. His112 functions as the Proton acceptor in the catalytic mechanism. Zn(2+)-binding residues include Cys120 and Cys139. Residues 179 to 181, 205 to 207, and Ala223 contribute to the NAD(+) site; these read GTS and NLE.

The protein belongs to the sirtuin family. Class III subfamily. The cofactor is Zn(2+).

The protein resides in the cytoplasm. The catalysed reaction is N(6)-acetyl-L-lysyl-[protein] + NAD(+) + H2O = 2''-O-acetyl-ADP-D-ribose + nicotinamide + L-lysyl-[protein]. The enzyme catalyses N(6)-succinyl-L-lysyl-[protein] + NAD(+) + H2O = 2''-O-succinyl-ADP-D-ribose + nicotinamide + L-lysyl-[protein]. NAD-dependent lysine deacetylase and desuccinylase that specifically removes acetyl and succinyl groups on target proteins. Modulates the activities of several proteins which are inactive in their acylated form. The polypeptide is NAD-dependent protein deacylase (Vibrio vulnificus (strain CMCP6)).